The sequence spans 856 residues: MAVARVDGALAPGEGSVVNWSGQGLQKLGANLPCEADVHTLILDKNQIIKLENLEKCKQLIQLSVANNRLVRMMGVAKLTQLRVLNLPHNSIGCVEGLKDLVHLEWLNLAGNNLKTMEQVNSCTALQHLDLSDNNIPQIGDVSKLISLKTLLLHGNIITSLRMAPAYLPRNLSILSLAENEIRDLNEISFLASLSELEQLSIMNNPCVMATPSIPGFDYRPFIVSWCLNLRVLDGYVISQKESLKAEWLYSQGKGRSYRPGQHIQLVQYLATVCPLTSALGLQTAEDAKLEKILSKQRFHQRQLMSQSQDEELSPLAAVETRVHRTPECSSPGQDFQESEPVLQINSWVGISSNDDQLYAVKNNFPAAAHAARYSRNDLHLEDIQTDEDKLNCSLLSSESTFMPVASGLSPVSPTVELRLQGINLGLEDDDGADEFTKGLENQDEDKDKEKSLWDMSESCVEMLKRKISTEVSEAAGLLPCPKSVIISAALKEDTHSLTSLPESAGHSASRTEANSEEAMSPATSEKFPCRILTQRPAALGQDKVTLQKLNAAATKLQACWRGFYTRNYNQQAKGVRYEIRLRRMQEHIVCLTDEVRRLRKERDEERVKTFVQEEAVRFLWNEVRSVQAWQQTVEQRLASWPPDVPPISSTLASPKPPLFPHHQDPSSDQSSDWLVAEDEAAQGRSAPDFPDSGFHSSLTEQVPCLQDSLDFEKSSVESSENSVLGNSADTVKCVKDRDSEATAEEHSDCSRESSASEQDNTLLQQYLTSVQQLDDAAEAADSDDVAGDGKRHLACSPERFDASSDSETHRVASTSQDEISQTPENCQLNEEAQGQPPECDPAFQGLHVGVTVQPV.

8 LRR repeats span residues 37-58, 59-80, 81-102, 103-124, 125-146, 147-168, 171-192, and 196-205; these read DVHTLILDKNQIIKLENLEKCK, QLIQLSVANNRLVRMMGVAKLT, QLRVLNLPHNSIGCVEGLKDLV, HLEWLNLAGNNLKTMEQVNSCT, ALQHLDLSDNNIPQIGDVSKLI, SLKTLLLHGNIITSLRMAPAYL, NLSILSLAENEIRDLNEISFLA, and ELEQLSIMNN. In terms of domain architecture, LRRCT spans 211–249; the sequence is TPSIPGFDYRPFIVSWCLNLRVLDGYVISQKESLKAEWL. The CCP110-binding stretch occupies residues 300–742; sequence HQRQLMSQSQ…KCVKDRDSEA (443 aa). Phosphoserine occurs at positions 308 and 410. Positions 430-451 are disordered; the sequence is DDGADEFTKGLENQDEDKDKEK. At Ser497 the chain carries Phosphoserine. The segment covering 498-513 has biased composition (polar residues); the sequence is LTSLPESAGHSASRTE. Residues 498–525 are disordered; it reads LTSLPESAGHSASRTEANSEEAMSPATS. Ser521 is modified (phosphoserine). Residue Thr534 is modified to Phosphothreonine. The IQ domain occupies 550 to 579; it reads LNAAATKLQACWRGFYTRNYNQQAKGVRYE. The interval 579–853 is interaction with MPHOSPH9; the sequence is EIRLRRMQEH…FQGLHVGVTV (275 aa). 2 disordered regions span residues 646–672 and 737–840; these read PPISSTLASPKPPLFPHHQDPSSDQSS and DRDS…PPEC. Residues 737-752 are compositionally biased toward basic and acidic residues; it reads DRDSEATAEEHSDCSR. A compositionally biased stretch (polar residues) spans 753-773; that stretch reads ESSASEQDNTLLQQYLTSVQQ. Residue Ser755 is modified to Phosphoserine. The span at 776 to 787 shows a compositional bias: acidic residues; the sequence is DAAEAADSDDVA. Basic and acidic residues predominate over residues 799 to 811; that stretch reads ERFDASSDSETHR. Residues 812–833 show a composition bias toward polar residues; sequence VASTSQDEISQTPENCQLNEEA.

Interacts with CALM1, CEP76, KIF24 and TALPID3. Interacts with CCP110. ENKD1 competes with CEP97 for binding to CCP110, destabilizing the interaction between CP110 and CEP97 which promotes the removal of CCP110 and CEP97 from the mother centriole and allows the initiation of ciliogenesis. Via its interaction with CCP110, may indirectly interact with HERC2 and NEURL4. Interacts with MPHOSPH9.

It localises to the cytoplasm. Its subcellular location is the cytoskeleton. It is found in the microtubule organizing center. The protein resides in the centrosome. The protein localises to the centriole. In terms of biological role, acts as a key negative regulator of ciliogenesis in collaboration with CCP110 by capping the mother centriole thereby preventing cilia formation. Required for recruitment of CCP110 to the centrosome. The sequence is that of Centrosomal protein of 97 kDa (Cep97) from Mus musculus (Mouse).